A 558-amino-acid chain; its full sequence is Polypeptide N-acetylgalactosaminyltransferase 16 (558 aa).

The Cytoplasmic segment spans residues 1–6; it reads MRKIRA. A helical; Signal-anchor for type II membrane protein transmembrane segment spans residues 7–26; the sequence is NAIAILTVAWILGTFYYLWQ. Residues 27–558 lie on the Lumenal side of the membrane; it reads DNRAHAASSG…AQQWQLLPHT (532 aa). Residues 33–54 form a disordered region; sequence ASSGGRGAQRAGRRSEQLREDR. Residues 45–54 are compositionally biased toward basic and acidic residues; it reads RRSEQLREDR. 5 cysteine pairs are disulfide-bonded: Cys-113/Cys-340, Cys-331/Cys-409, Cys-441/Cys-460, Cys-486/Cys-506, and Cys-530/Cys-543. The segment at 122–227 is catalytic subdomain A; it reads LPATSVIITF…TEWLPPMLQR (106 aa). Positions 163 and 188 each coordinate substrate. Position 211 (Asp-211) interacts with Mn(2+). Ser-212 is a binding site for substrate. His-213 is a Mn(2+) binding site. The catalytic subdomain B stretch occupies residues 286-348; it reads PIRTPVIAGG…PCSRVGHVFR (63 aa). Trp-317 serves as a coordination point for substrate. His-345 contributes to the Mn(2+) binding site. Substrate contacts are provided by Arg-348, His-351, and Tyr-353. Residues 428-555 form the Ricin B-type lectin domain; the sequence is KEALPGIIKQ…DAQAQQWQLL (128 aa).

Belongs to the glycosyltransferase 2 family. GalNAc-T subfamily. Mn(2+) is required as a cofactor.

The protein resides in the golgi apparatus membrane. The catalysed reaction is L-seryl-[protein] + UDP-N-acetyl-alpha-D-galactosamine = a 3-O-[N-acetyl-alpha-D-galactosaminyl]-L-seryl-[protein] + UDP + H(+). It catalyses the reaction L-threonyl-[protein] + UDP-N-acetyl-alpha-D-galactosamine = a 3-O-[N-acetyl-alpha-D-galactosaminyl]-L-threonyl-[protein] + UDP + H(+). It functions in the pathway protein modification; protein glycosylation. Functionally, catalyzes the initial reaction in O-linked oligosaccharide biosynthesis, the transfer of an N-acetyl-D-galactosamine residue to a serine or threonine residue on the protein receptor. The polypeptide is Polypeptide N-acetylgalactosaminyltransferase 16 (GALNT16) (Homo sapiens (Human)).